A 290-amino-acid polypeptide reads, in one-letter code: 4-diphosphocytidyl-2-C-methyl-D-erythritol kinase (290 aa).

Residue Lys8 is part of the active site. 89–99 (PIGAGVGGGSS) provides a ligand contact to ATP. Asp131 is an active-site residue.

The protein belongs to the GHMP kinase family. IspE subfamily.

It catalyses the reaction 4-CDP-2-C-methyl-D-erythritol + ATP = 4-CDP-2-C-methyl-D-erythritol 2-phosphate + ADP + H(+). The protein operates within isoprenoid biosynthesis; isopentenyl diphosphate biosynthesis via DXP pathway; isopentenyl diphosphate from 1-deoxy-D-xylulose 5-phosphate: step 3/6. Its function is as follows. Catalyzes the phosphorylation of the position 2 hydroxy group of 4-diphosphocytidyl-2C-methyl-D-erythritol. The chain is 4-diphosphocytidyl-2-C-methyl-D-erythritol kinase from Chlamydia felis (strain Fe/C-56) (Chlamydophila felis).